The chain runs to 397 residues: DNA replication and repair protein RecF (397 aa).

30 to 37 (GPNGQGKT) contributes to the ATP binding site.

The protein belongs to the RecF family.

It is found in the cytoplasm. In terms of biological role, the RecF protein is involved in DNA metabolism; it is required for DNA replication and normal SOS inducibility. RecF binds preferentially to single-stranded, linear DNA. It also seems to bind ATP. This chain is DNA replication and repair protein RecF, found in Beutenbergia cavernae (strain ATCC BAA-8 / DSM 12333 / CCUG 43141 / JCM 11478 / NBRC 16432 / NCIMB 13614 / HKI 0122).